A 330-amino-acid polypeptide reads, in one-letter code: Aspartate--ammonia ligase (330 aa).

This sequence belongs to the class-II aminoacyl-tRNA synthetase family. AsnA subfamily.

It is found in the cytoplasm. It catalyses the reaction L-aspartate + NH4(+) + ATP = L-asparagine + AMP + diphosphate + H(+). It participates in amino-acid biosynthesis; L-asparagine biosynthesis; L-asparagine from L-aspartate (ammonia route): step 1/1. This Streptococcus pyogenes serotype M49 (strain NZ131) protein is Aspartate--ammonia ligase.